A 648-amino-acid chain; its full sequence is Zinc finger protein 202 (648 aa).

K22 participates in a covalent cross-link: Glycyl lysine isopeptide (Lys-Gly) (interchain with G-Cter in SUMO2). In terms of domain architecture, SCAN box spans H46–Q127. The disordered stretch occupies residues S146–G221. A compositionally biased stretch (polar residues) spans P165–P182. A KRAB domain is found at V237 to E308. 2 C2H2-type zinc fingers span residues H397–H419 and Y425–H447. Residues K454 and K460 each participate in a glycyl lysine isopeptide (Lys-Gly) (interchain with G-Cter in SUMO2) cross-link. A Phosphoserine modification is found at S466. The C2H2-type 3 zinc-finger motif lies at Y481–H503. Residues K507 and K521 each participate in a glycyl lysine isopeptide (Lys-Gly) (interchain with G-Cter in SUMO2) cross-link. 5 consecutive C2H2-type zinc fingers follow at residues F509 to H531, Y537 to H559, Y565 to H587, C593 to H615, and F621 to H643.

Interacts with SDP1. Highly expressed in testis. Also expressed in breast carcinoma cell lines.

It is found in the nucleus. Its function is as follows. Transcriptional repressor that binds to elements found predominantly in genes that participate in lipid metabolism. Among its targets are structural components of lipoprotein particles (apolipoproteins AIV, CIII, and E), enzymes involved in lipid processing (lipoprotein lipase, lecithin cholesteryl ester transferase), transporters involved in lipid homeostasis (ABCA1, ABCG1), and several genes involved in processes related to energy metabolism and vascular disease. The sequence is that of Zinc finger protein 202 (ZNF202) from Homo sapiens (Human).